The following is a 175-amino-acid chain: Secretion monitor (175 aa).

Residues 1-38 (MSIINFWRQFGRRYFWSHLLLGMVAAGIGMPSLVSAHA) form the signal peptide.

This sequence belongs to the SecM family.

It is found in the cytoplasm. The protein localises to the cytosol. The protein resides in the periplasm. Regulates secA expression by translational coupling of the secM secA operon. Translational pausing at a specific Pro residue 5 residues before the end of the protein may allow disruption of a mRNA repressor helix that normally suppresses secA translation initiation. The polypeptide is Secretion monitor (Proteus mirabilis (strain HI4320)).